Consider the following 357-residue polypeptide: UDP-N-acetylglucosamine--N-acetylmuramyl-(pentapeptide) pyrophosphoryl-undecaprenol N-acetylglucosamine transferase (357 aa).

UDP-N-acetyl-alpha-D-glucosamine is bound by residues threonine 15–glycine 17, asparagine 124, arginine 165, serine 194, and glutamine 288.

This sequence belongs to the glycosyltransferase 28 family. MurG subfamily.

The protein localises to the cell inner membrane. It carries out the reaction di-trans,octa-cis-undecaprenyl diphospho-N-acetyl-alpha-D-muramoyl-L-alanyl-D-glutamyl-meso-2,6-diaminopimeloyl-D-alanyl-D-alanine + UDP-N-acetyl-alpha-D-glucosamine = di-trans,octa-cis-undecaprenyl diphospho-[N-acetyl-alpha-D-glucosaminyl-(1-&gt;4)]-N-acetyl-alpha-D-muramoyl-L-alanyl-D-glutamyl-meso-2,6-diaminopimeloyl-D-alanyl-D-alanine + UDP + H(+). It participates in cell wall biogenesis; peptidoglycan biosynthesis. Functionally, cell wall formation. Catalyzes the transfer of a GlcNAc subunit on undecaprenyl-pyrophosphoryl-MurNAc-pentapeptide (lipid intermediate I) to form undecaprenyl-pyrophosphoryl-MurNAc-(pentapeptide)GlcNAc (lipid intermediate II). This Nostoc punctiforme (strain ATCC 29133 / PCC 73102) protein is UDP-N-acetylglucosamine--N-acetylmuramyl-(pentapeptide) pyrophosphoryl-undecaprenol N-acetylglucosamine transferase.